The following is a 262-amino-acid chain: Phosphonates import ATP-binding protein PhnC (262 aa).

The 249-residue stretch at 5-253 folds into the ABC transporter domain; it reads IRVEKLAKTF…RFDHLYRSIN (249 aa). Position 37 to 44 (37 to 44) interacts with ATP; it reads GPSGSGKS.

This sequence belongs to the ABC transporter superfamily. Phosphonates importer (TC 3.A.1.9.1) family. The complex is composed of two ATP-binding proteins (PhnC), two transmembrane proteins (PhnE) and a solute-binding protein (PhnD).

It localises to the cell inner membrane. The enzyme catalyses phosphonate(out) + ATP + H2O = phosphonate(in) + ADP + phosphate + H(+). Part of the ABC transporter complex PhnCDE involved in phosphonates import. Responsible for energy coupling to the transport system. This Shigella boydii serotype 4 (strain Sb227) protein is Phosphonates import ATP-binding protein PhnC.